A 666-amino-acid chain; its full sequence is DNA-directed RNA polymerase subunit beta' (666 aa).

Residues Cys69, Cys71, Cys87, and Cys90 each coordinate Zn(2+). Mg(2+) contacts are provided by Asp489, Asp491, and Asp493.

Belongs to the RNA polymerase beta' chain family. RpoC1 subfamily. As to quaternary structure, in plastids the minimal PEP RNA polymerase catalytic core is composed of four subunits: alpha, beta, beta', and beta''. When a (nuclear-encoded) sigma factor is associated with the core the holoenzyme is formed, which can initiate transcription. The cofactor is Mg(2+). It depends on Zn(2+) as a cofactor.

It is found in the plastid. Its subcellular location is the chloroplast. The catalysed reaction is RNA(n) + a ribonucleoside 5'-triphosphate = RNA(n+1) + diphosphate. Its function is as follows. DNA-dependent RNA polymerase catalyzes the transcription of DNA into RNA using the four ribonucleoside triphosphates as substrates. This is DNA-directed RNA polymerase subunit beta' from Chara vulgaris (Common stonewort).